We begin with the raw amino-acid sequence, 485 residues long: Neuropeptide F receptor (485 aa).

Residues 1–91 (MIISMNQTEP…DSPWYHMLIS (91 aa)) are Extracellular-facing. Residues 92 to 112 (MYGVLIVFGALGNTLVVIAVI) traverse the membrane as a helical segment. At 113–122 (RKPIMRTARN) the chain is on the cytoplasmic side. A helical membrane pass occupies residues 123 to 143 (LFILNLAISDLLLCLVTMPLT). At 144–163 (LMEILSKYWPYGSCSILCKT) the chain is on the extracellular side. C161 and C248 are disulfide-bonded. The helical transmembrane segment at 164 to 184 (IAMLQALCIFVSTISITAIAF) threads the bilayer. Over 185–202 (DRYQVIVYPTRDSLQFVG) the chain is Cytoplasmic. A helical transmembrane segment spans residues 203–223 (AVTILAGIWALALLLASPLFV). Residues 224–262 (YKELINTDTPALLQQIGLQDTIPYCIEDWPSRNGRFYYS) lie on the Extracellular side of the membrane. The chain crosses the membrane as a helical span at residues 263–283 (IFSLCVQYLVPILIVSVAYFG). The Cytoplasmic portion of the chain corresponds to 284-317 (IYNKLKSRITVVAVQASSAQRKVERGRRMKRTNC). A helical transmembrane segment spans residues 318–338 (LLISIAIIFGVSWLPLNFFNL). Topologically, residues 339–355 (YADMERSPVTQSMLVRY) are extracellular. A helical membrane pass occupies residues 356–376 (AICHMIGMSSACSNPLLYGWL). The Cytoplasmic segment spans residues 377 to 485 (NDNFRKEFQE…PSEVTKLMPR (109 aa)).

This sequence belongs to the G-protein coupled receptor 1 family. In terms of tissue distribution, expressed in midgut, brain lobes and ventral nerve cord of larvae. In adults, expressed in a pair of dorsolateral neurons in the protocerebrum, and the central complex and a small number of neurons in the subesophageal ganglion (at protein level). Expressed in a subset of sugar-responsive PAIN neurons in the thoracic body but is absent from other peripheral PAIN neurons.

The protein localises to the membrane. Receptor for NPF. Integral part of the sensory system that mediates food signaling, providing the neural basis for the regulation of food response; coordinates larval foraging and social behavior changes during development. Required in dopaminergic (DA) neurons that innervate the mushroom body for satiety to suppress appetitive memory performance; a key factor in the internal state of hunger in the brain. NPF neurons coordinately modulate diverse sensory and motor neurons important for feeding, flight, and locomotion. NPF/NPFR pathway exerts its suppressive effect on larval aversion to diverse stressful stimuli (chemical stress and noxious heat) through attenuation of TRP channel-induced neuronal excitation. NPF neural signaling system plays a physiological role in acute modulation of alcohol sensitivity in adults, rather than a general response to intoxication by sedative agents. Activation and inhibition of the NPF system reduces and enhances ethanol preference, respectively. Sexual experience, the NPF system activity and ethanol consumption are all linked; sexual deprivation is a major contributor to enhanced ethanol preference. The polypeptide is Neuropeptide F receptor (Drosophila melanogaster (Fruit fly)).